We begin with the raw amino-acid sequence, 64 residues long: DNA-binding protein 7 (64 aa).

N6-methyllysine is present on residues Lys5 and Lys7.

The protein belongs to the 7 kDa DNA-binding/endoribonuclease P2 family. As to quaternary structure, monomer.

The protein resides in the cytoplasm. In terms of biological role, can constrain negative DNA supercoils. May be involved in maintaining the integrity of the genome at high temperature. The sequence is that of DNA-binding protein 7 from Sulfurisphaera tokodaii (strain DSM 16993 / JCM 10545 / NBRC 100140 / 7) (Sulfolobus tokodaii).